The sequence spans 430 residues: UDP-N-acetylglucosamine 1-carboxyvinyltransferase (430 aa).

Position 22 to 23 (22 to 23 (KN)) interacts with phosphoenolpyruvate. R102 serves as a coordination point for UDP-N-acetyl-alpha-D-glucosamine. C126 acts as the Proton donor in catalysis. C126 is modified (2-(S-cysteinyl)pyruvic acid O-phosphothioketal). UDP-N-acetyl-alpha-D-glucosamine contacts are provided by residues 131–135 (RPVDL), 172–175 (KVSV), D317, and I339.

This sequence belongs to the EPSP synthase family. MurA subfamily.

It localises to the cytoplasm. The catalysed reaction is phosphoenolpyruvate + UDP-N-acetyl-alpha-D-glucosamine = UDP-N-acetyl-3-O-(1-carboxyvinyl)-alpha-D-glucosamine + phosphate. The protein operates within cell wall biogenesis; peptidoglycan biosynthesis. Its function is as follows. Cell wall formation. Adds enolpyruvyl to UDP-N-acetylglucosamine. The polypeptide is UDP-N-acetylglucosamine 1-carboxyvinyltransferase (Rhizobium meliloti (strain 1021) (Ensifer meliloti)).